We begin with the raw amino-acid sequence, 839 residues long: V-type proton ATPase 116 kDa subunit a 1 (839 aa).

Over 1-395 (MGELFRSEEM…DAYGIGTYRE (395 aa)) the chain is Cytoplasmic. 2 positions are modified to phosphothreonine: Thr-257 and Thr-367. Residue Tyr-371 is modified to Phosphotyrosine. The chain crosses the membrane as a helical span at residues 396-414 (INPAPYTVITFPFLFAVMF). Over 415-416 (GD) the chain is Vacuolar. Residues 417 to 433 (FGHGILMTLFAVWMVLR) form a helical membrane-spanning segment. Over 434–448 (ESRILSQKHENEMFS) the chain is Cytoplasmic. A helical membrane pass occupies residues 449–478 (MVFSGRYIILLMGLFSIYTGLIYNDCFSKS). Over 479–542 (LNIFGSSWSV…ATNKLTFLNS (64 aa)) the chain is Vacuolar. A helical transmembrane segment spans residues 543-562 (FKMKMSVILGIIHMLFGVSL). The Cytoplasmic portion of the chain corresponds to 563–580 (SLFNHIYFKKPLNIYFGF). A helical transmembrane segment spans residues 581–601 (IPEIIFMSSLFGYLVILIFYK). At 602–646 (WTAYDAHSSRNAPSLLIHFINMFLFSYPESGNAMLYSGQKGIQCF) the chain is on the vacuolar side. Residues 647–666 (LIVVAMLCVPWMLLFKPLIL) form a helical membrane-spanning segment. At 667-726 (RHQYLRKKHLGTLNFGGIRVGNGPTEEDAEIIQHDQLSTHSEDAEEFDFGDTMVHQAIHT) the chain is on the cytoplasmic side. Residues 727-751 (IEYCLGCISNTASYLRLWALSLAHA) traverse the membrane as a helical segment. At 752-772 (QLSEVLWTMVIHIGLHVRSLA) the chain is on the vacuolar side. The chain crosses the membrane as a helical span at residues 773 to 811 (GGLGLFFIFAAFATLTVAILLIMEGLSAFLHALRLHWVE). Over 812 to 839 (FQNKFYTGTGFKFLPFSFEHIREGKFDE) the chain is Cytoplasmic.

This sequence belongs to the V-ATPase 116 kDa subunit family. V-ATPase is a heteromultimeric enzyme made up of two complexes: the ATP-hydrolytic V1 complex and the proton translocation V0 complex. The V1 complex consists of three catalytic AB heterodimers that form a heterohexamer, three peripheral stalks each consisting of EG heterodimers, one central rotor including subunits D and F, and the regulatory subunits C and H. The proton translocation complex V0 consists of the proton transport subunit a, a ring of proteolipid subunits c9c'', rotary subunit d, subunits e and f, and the accessory subunits ATP6AP1/Ac45 and ATP6AP2/PRR. Interacts with SPAAR. In terms of tissue distribution, predominantly expressed in neurons in the cortex and in the dentate gyrus, CA1 and CA3 regions of the hippocampus (at protein level). Expressed at lower levels in astrocytes, oligodendrocytes and microglia (at protein level). In the cerebellum, present in Purkinje and granule cells (at protein level).

Its subcellular location is the cytoplasmic vesicle. It is found in the clathrin-coated vesicle membrane. The protein localises to the secretory vesicle. The protein resides in the synaptic vesicle membrane. It localises to the melanosome. In terms of biological role, subunit of the V0 complex of vacuolar(H+)-ATPase (V-ATPase), a multisubunit enzyme composed of a peripheral complex (V1) that hydrolyzes ATP and a membrane integral complex (V0) that translocates protons. V-ATPase is responsible for the acidification of various organelles, such as lysosomes, endosomes, the trans-Golgi network, and secretory granules, including synaptic vesicles. In certain cell types, can be exported to the plasma membrane, where it is involved in the acidification of the extracellular environment. Required for assembly and activity of the vacuolar ATPase. Through its action on compartment acidification, plays an essential role in neuronal development in terms of integrity and connectivity of neurons. This is V-type proton ATPase 116 kDa subunit a 1 (Atp6v0a1) from Mus musculus (Mouse).